Consider the following 427-residue polypeptide: Adenylosuccinate synthetase (427 aa).

GTP-binding positions include 12-18 and 40-42; these read GDEGKGK and GHT. Asp13 serves as the catalytic Proton acceptor. Mg(2+) contacts are provided by Asp13 and Gly40. IMP contacts are provided by residues 13 to 16, 38 to 41, Thr128, Arg142, Gln223, Thr238, and Arg302; these read DEGK and NAGH. The active-site Proton donor is the His41. Position 298–304 (298–304) interacts with substrate; sequence TTTGRPR. GTP is bound by residues Arg304, 330–332, and 412–414; these read SID and SVG.

Belongs to the adenylosuccinate synthetase family. Homodimer. Requires Mg(2+) as cofactor.

It localises to the cytoplasm. The enzyme catalyses IMP + L-aspartate + GTP = N(6)-(1,2-dicarboxyethyl)-AMP + GDP + phosphate + 2 H(+). The protein operates within purine metabolism; AMP biosynthesis via de novo pathway; AMP from IMP: step 1/2. In terms of biological role, plays an important role in the de novo pathway of purine nucleotide biosynthesis. Catalyzes the first committed step in the biosynthesis of AMP from IMP. This is Adenylosuccinate synthetase from Staphylococcus epidermidis (strain ATCC 12228 / FDA PCI 1200).